We begin with the raw amino-acid sequence, 336 residues long: tRNA N6-adenosine threonylcarbamoyltransferase (336 aa).

2 residues coordinate Fe cation: H114 and H118. Residues 136-140, D169, G182, D186, and N275 contribute to the substrate site; that span reads LVSGG. Residue D301 coordinates Fe cation.

It belongs to the KAE1 / TsaD family. It depends on Fe(2+) as a cofactor.

It is found in the cytoplasm. The catalysed reaction is L-threonylcarbamoyladenylate + adenosine(37) in tRNA = N(6)-L-threonylcarbamoyladenosine(37) in tRNA + AMP + H(+). In terms of biological role, required for the formation of a threonylcarbamoyl group on adenosine at position 37 (t(6)A37) in tRNAs that read codons beginning with adenine. Is involved in the transfer of the threonylcarbamoyl moiety of threonylcarbamoyl-AMP (TC-AMP) to the N6 group of A37, together with TsaE and TsaB. TsaD likely plays a direct catalytic role in this reaction. This is tRNA N6-adenosine threonylcarbamoyltransferase from Streptococcus pneumoniae (strain Taiwan19F-14).